A 297-amino-acid polypeptide reads, in one-letter code: Phosphatidylinositol N-acetylglucosaminyltransferase subunit C (297 aa).

8 helical membrane passes run 51 to 71 (VVFESSVVIQQLCSVCVFVVI), 80 to 100 (LAPHWLLGTGLASSLIGYVLF), 117 to 137 (WADLKSALVFITFTYGFSPVL), 153 to 173 (SVFMLLGHLIFFDYGANAAIV), 174 to 194 (SSTLSLNMAIFASVCLASRLP), 196 to 216 (SLHAFIMVTFAIQIFALWPML), 227 to 244 (SYVGVTLLFAFSAVGGLL), and 250 to 270 (GAVLFALLLMSISCLCPFYLI).

It belongs to the PIGC family. Component of the glycosylphosphatidylinositol-N-acetylglucosaminyltransferase (GPI-GnT) complex composed at least by PIGA, PIGC, PIGH, PIGP, PIGQ, PIGY and DPM2. Interacts with PIGQ. Interacts with the heterodimer PIGA:PIGH.

It localises to the endoplasmic reticulum membrane. It functions in the pathway glycolipid biosynthesis; glycosylphosphatidylinositol-anchor biosynthesis. Part of the glycosylphosphatidylinositol-N-acetylglucosaminyltransferase (GPI-GnT) complex that catalyzes the transfer of N-acetylglucosamine from UDP-N-acetylglucosamine to phosphatidylinositol and participates in the first step of GPI biosynthesis. The chain is Phosphatidylinositol N-acetylglucosaminyltransferase subunit C from Homo sapiens (Human).